Consider the following 298-residue polypeptide: L-xylulose reductase (298 aa).

NADP(+) contacts are provided by Ile-19, Asp-68, and Asn-103. Residues Ser-161, Ser-162, and Tyr-175 each act as proton donor in the active site. The NADP(+) site is built by Tyr-175, Lys-179, and Val-207. Catalysis depends on Lys-179, which acts as the Lowers pKa of active site Tyr.

The protein belongs to the short-chain dehydrogenases/reductases (SDR) family.

The catalysed reaction is xylitol + NADP(+) = L-xylulose + NADPH + H(+). It participates in carbohydrate degradation; L-arabinose degradation via L-arabinitol; D-xylulose 5-phosphate from L-arabinose (fungal route): step 3/5. Functionally, L-xylulose reductase involved in the catabolism of L-arabinose through an oxidoreductive pathway. Catalyzes the NADPH-dependent reduction of L-xylulose. This is L-xylulose reductase from Aspergillus niger (strain ATCC 1015 / CBS 113.46 / FGSC A1144 / LSHB Ac4 / NCTC 3858a / NRRL 328 / USDA 3528.7).